The sequence spans 130 residues: MSMQDTLADMFTRIRNAQMATKETVTMPSSNLKTEVARVLKQEGYINDFTVTEGAKPQLAVTLKYFEGKPVIEHIQRFSKPSLRSYKGKDALPKVADGLGIAIVTTSQGVMTDRAARQAGVGGEVICTVF.

The protein belongs to the universal ribosomal protein uS8 family. In terms of assembly, part of the 30S ribosomal subunit. Contacts proteins S5 and S12.

Functionally, one of the primary rRNA binding proteins, it binds directly to 16S rRNA central domain where it helps coordinate assembly of the platform of the 30S subunit. The protein is Small ribosomal subunit protein uS8 of Chromohalobacter salexigens (strain ATCC BAA-138 / DSM 3043 / CIP 106854 / NCIMB 13768 / 1H11).